The chain runs to 289 residues: NAD(P)H-hydrate epimerase (289 aa).

In terms of domain architecture, YjeF N-terminal spans 71–277 (AQTIDNELMS…SIVEKYNLKI (207 aa)). 122-126 (NNGGD) contacts (6S)-NADPHX. Residues asparagine 123 and aspartate 185 each coordinate K(+). (6S)-NADPHX-binding positions include 189–195 (GFSFRGE) and aspartate 218. Serine 221 serves as a coordination point for K(+).

This sequence belongs to the NnrE/AIBP family. The cofactor is K(+).

The enzyme catalyses (6R)-NADHX = (6S)-NADHX. It catalyses the reaction (6R)-NADPHX = (6S)-NADPHX. Functionally, catalyzes the epimerization of the S- and R-forms of NAD(P)HX, a damaged form of NAD(P)H that is a result of enzymatic or heat-dependent hydration. This is a prerequisite for the S-specific NAD(P)H-hydrate dehydratase to allow the repair of both epimers of NAD(P)HX. This is NAD(P)H-hydrate epimerase from Plasmodium knowlesi (strain H).